The sequence spans 847 residues: Leucine--tRNA ligase (847 aa).

The 'HIGH' region motif lies at 41–51; sequence PYPSGRIHMGH. The short motif at 619-623 is the 'KMSKS' region element; it reads KMSKS. Lys-622 lines the ATP pocket.

This sequence belongs to the class-I aminoacyl-tRNA synthetase family.

The protein resides in the cytoplasm. It catalyses the reaction tRNA(Leu) + L-leucine + ATP = L-leucyl-tRNA(Leu) + AMP + diphosphate. The protein is Leucine--tRNA ligase of Cereibacter sphaeroides (strain KD131 / KCTC 12085) (Rhodobacter sphaeroides).